A 263-amino-acid polypeptide reads, in one-letter code: Interleukin-33 (263 aa).

The span at 1–17 (MKYSTTKIPPAKMNSSA) shows a compositional bias: polar residues. Residues 1–28 (MKYSTTKIPPAKMNSSADKALVKSPKLR) form a disordered region. The tract at residues 1-65 (MKYSTTKIPP…CYFRKEITKR (65 aa)) is homeodomain-like HTH domain. Residues 62-103 (ITKRYSPRTAEKCRKQCLVFTACHQQLNKDFTSDVPMLQKCF) are interaction with RELA.

It belongs to the IL-1 family. Highly divergent. In terms of assembly, forms a 1:1:1 heterotrimeric complex with its primary high-affinity receptor IL1RL1 and the coreceptor IL1RAP. Interacts with cargo receptor TMED10; the interaction mediates the translocation from the cytoplasm into the ERGIC (endoplasmic reticulum-Golgi intermediate compartment) and thereby secretion. The full-length protein can be released from cells and is able to signal via the IL1RL1/ST2 receptor. However, proteolytic processing by CELA1, CSTG/cathepsin G and ELANE/neutrophil elastase produces C-terminal peptides that are more active than the unprocessed full-length protein. May also be proteolytically processed by calpains. Proteolytic cleavage mediated by apoptotic caspases including CASP3 and CASP7 results in IL33 inactivation. In vitro proteolytic cleavage by CASP1 was reported but could not be confirmed in vivo suggesting that IL33 is probably not a direct substrate for that caspase. In terms of tissue distribution, expressed in cultured umbilical artery smooth muscle cells after stimulation with IL1A and IL1B, and to a lesser extent with IFNG. Expressed in vasospastic cerebral arteries after subarachnoid hemorrhage.

Its subcellular location is the nucleus. The protein localises to the chromosome. The protein resides in the cytoplasm. It is found in the cytoplasmic vesicle. It localises to the secretory vesicle. Its subcellular location is the secreted. Cytokine that binds to and signals through the IL1RL1/ST2 receptor which in turn activates NF-kappa-B and MAPK signaling pathways in target cells. Involved in the maturation of Th2 cells inducing the secretion of T-helper type 2-associated cytokines. Also involved in activation of mast cells, basophils, eosinophils and natural killer cells. Acts as a chemoattractant for Th2 cells, and may function as an 'alarmin', that amplifies immune responses during tissue injury. Induces rapid UCP2-dependent mitochondrial rewiring that attenuates the generation of reactive oxygen species and preserves the integrity of Krebs cycle required for persistent production of itaconate and subsequent GATA3-dependent differentiation of inflammation-resolving alternatively activated macrophages. In terms of biological role, in quiescent endothelia the uncleaved form is constitutively and abundantly expressed, and acts as a chromatin-associated nuclear factor with transcriptional repressor properties, it may sequester nuclear NF-kappaB/RELA, lowering expression of its targets. This form is rapidely lost upon angiogenic or pro-inflammatory activation. The chain is Interleukin-33 (IL33) from Canis lupus familiaris (Dog).